A 465-amino-acid chain; its full sequence is 23S rRNA (uracil(1939)-C(5))-methyltransferase RlmD (465 aa).

Positions 1–22 (MSEAVPTSARKSKNAPVAPGPA) are disordered. Residues 16–80 (PVAPGPAPVL…PSYEQATVVD (65 aa)) form the TRAM domain. Positions 93, 99, 102, and 181 each coordinate [4Fe-4S] cluster. Residues Gln-289, Phe-318, Asn-323, Glu-339, Asn-367, and Asp-388 each contribute to the S-adenosyl-L-methionine site. The Nucleophile role is filled by Cys-421.

The protein belongs to the class I-like SAM-binding methyltransferase superfamily. RNA M5U methyltransferase family. RlmD subfamily.

The catalysed reaction is uridine(1939) in 23S rRNA + S-adenosyl-L-methionine = 5-methyluridine(1939) in 23S rRNA + S-adenosyl-L-homocysteine + H(+). Catalyzes the formation of 5-methyl-uridine at position 1939 (m5U1939) in 23S rRNA. In Burkholderia cenocepacia (strain HI2424), this protein is 23S rRNA (uracil(1939)-C(5))-methyltransferase RlmD.